The sequence spans 1036 residues: Beta-galactosidase (1036 aa).

The substrate site is built by N97 and D197. Na(+) is bound at residue D197. Positions 411, 413, and 456 each coordinate Mg(2+). Residues E456 and E532–H535 contribute to the substrate site. E456 (proton donor) is an active-site residue. The active-site Nucleophile is E532. N592 serves as a coordination point for Mg(2+). Na(+) contacts are provided by F596 and D599. Substrate is bound by residues D599 and W1006.

The protein belongs to the glycosyl hydrolase 2 family. Homotetramer. It depends on Mg(2+) as a cofactor. Na(+) is required as a cofactor.

The catalysed reaction is Hydrolysis of terminal non-reducing beta-D-galactose residues in beta-D-galactosides.. This Leuconostoc mesenteroides subsp. mesenteroides (strain ATCC 8293 / DSM 20343 / BCRC 11652 / CCM 1803 / JCM 6124 / NCDO 523 / NBRC 100496 / NCIMB 8023 / NCTC 12954 / NRRL B-1118 / 37Y) protein is Beta-galactosidase.